We begin with the raw amino-acid sequence, 243 residues long: Putative outer membrane protein RP075 (243 aa).

The first 23 residues, 1–23 (MLRIVKKLWVILFISNISINSFA), serve as a signal peptide directing secretion.

It belongs to the OmpW/AlkL family.

It is found in the cell outer membrane. This Rickettsia prowazekii (strain Madrid E) protein is Putative outer membrane protein RP075.